Reading from the N-terminus, the 303-residue chain is tRNA dimethylallyltransferase (303 aa).

ATP is bound at residue 9–16; that stretch reads GPTAVGKT. 11-16 contributes to the substrate binding site; the sequence is TAVGKT. Positions 34 to 37 are interaction with substrate tRNA; it reads DSRQ.

It belongs to the IPP transferase family. In terms of assembly, monomer. Mg(2+) is required as a cofactor.

It carries out the reaction adenosine(37) in tRNA + dimethylallyl diphosphate = N(6)-dimethylallyladenosine(37) in tRNA + diphosphate. In terms of biological role, catalyzes the transfer of a dimethylallyl group onto the adenine at position 37 in tRNAs that read codons beginning with uridine, leading to the formation of N6-(dimethylallyl)adenosine (i(6)A). This is tRNA dimethylallyltransferase from Petrotoga mobilis (strain DSM 10674 / SJ95).